The sequence spans 395 residues: Leucine aminopeptidase 1 (395 aa).

The first 19 residues, 1 to 19, serve as a signal peptide directing secretion; it reads MKHLSLLALAAVAPTTALA. Positions 20–95 are excised as a propeptide; sequence GVIDHQQVTF…SVKSFEQTKV (76 aa). Asn187 carries N-linked (GlcNAc...) asparagine glycosylation. Residues His195, Asp214, Glu253, and Asp280 each contribute to the Zn(2+) site. The cysteines at positions 329 and 333 are disulfide-linked. Position 362 (His362) interacts with Zn(2+).

This sequence belongs to the peptidase M28 family. M28E subfamily. Monomer. The cofactor is Zn(2+).

It is found in the secreted. Functionally, extracellular aminopeptidase that allows assimilation of proteinaceous substrates. The polypeptide is Leucine aminopeptidase 1 (LAP1) (Uncinocarpus reesii (strain UAMH 1704)).